Consider the following 200-residue polypeptide: Translation machinery-associated protein 22 (200 aa).

The SUI1 domain occupies Val95 to Leu166.

This sequence belongs to the DENR family. As to quaternary structure, interacts with the 40S ribosomal subunit.

It is found in the cytoplasm. The chain is Translation machinery-associated protein 22 (TMA22) from Kluyveromyces lactis (strain ATCC 8585 / CBS 2359 / DSM 70799 / NBRC 1267 / NRRL Y-1140 / WM37) (Yeast).